Reading from the N-terminus, the 110-residue chain is UPF0060 membrane protein Bamb_1160 (110 aa).

4 helical membrane-spanning segments follow: residues alanine 9–leucine 29, proline 34–leucine 54, tyrosine 66–leucine 86, and arginine 88–proline 108.

Belongs to the UPF0060 family.

It localises to the cell inner membrane. The protein is UPF0060 membrane protein Bamb_1160 of Burkholderia ambifaria (strain ATCC BAA-244 / DSM 16087 / CCUG 44356 / LMG 19182 / AMMD) (Burkholderia cepacia (strain AMMD)).